Reading from the N-terminus, the 65-residue chain is Large ribosomal subunit protein bL35 (65 aa).

The protein belongs to the bacterial ribosomal protein bL35 family.

The protein is Large ribosomal subunit protein bL35 of Paraburkholderia xenovorans (strain LB400).